Here is a 118-residue protein sequence, read N- to C-terminus: MASARGAKQSSPRVGTTRYTETSTVRVETSSHRVETSSRRVETSQRRSEGPSLSPSGKRLPRILEASSRHVESSSQRTETTSRHVRASSLRVETSLHCAESPTPRAKPAARQNEKTAR.

Residues 1 to 118 are disordered; that stretch reads MASARGAKQS…AARQNEKTAR (118 aa). Residues 13–28 show a composition bias toward low complexity; sequence RVGTTRYTETSTVRVE. Over residues 29-49 the composition is skewed to basic and acidic residues; the sequence is TSSHRVETSSRRVETSQRRSE.

This is an uncharacterized protein from Homo sapiens (Human).